A 60-amino-acid polypeptide reads, in one-letter code: Homeobox protein engrailed-like B (60 aa).

The segment at residues 1-41 (VEQLQRLKSEFGASRYLTEARRQALAQELRLNEAQIKIWFQ) is a DNA-binding region (homeobox).

It belongs to the engrailed homeobox family.

It is found in the nucleus. In Myxine glutinosa (Atlantic hagfish), this protein is Homeobox protein engrailed-like B.